We begin with the raw amino-acid sequence, 341 residues long: HTH-type transcriptional repressor PurR (341 aa).

The region spanning Ala2–Val56 is the HTH lacI-type domain. The segment at residues Ile4–Asn23 is a DNA-binding region (H-T-H motif). A DNA-binding region spans residues Ser48–Val56. The hypoxanthine site is built by Tyr73, Arg190, Thr192, Phe221, and Asp275.

Homodimer.

The protein operates within purine metabolism; purine nucleotide biosynthesis [regulation]. Its function is as follows. Is the main repressor of the genes involved in the de novo synthesis of purine nucleotides, regulating purB, purC, purEK, purF, purHD, purL, purMN and guaBA expression. PurR is allosterically activated to bind its cognate DNA by binding the purine corepressors, hypoxanthine or guanine, thereby effecting transcription repression. This Pectobacterium atrosepticum (strain SCRI 1043 / ATCC BAA-672) (Erwinia carotovora subsp. atroseptica) protein is HTH-type transcriptional repressor PurR.